Consider the following 564-residue polypeptide: Rho guanine nucleotide exchange factor 9 (564 aa).

Residues 8 to 67 (DSIVSAEAVWDHATMANRELAFKAGDVIKVLDASNKDWWWGQIDDEEGWFPASFVRLWVN) form the SH3 domain. The interaction with GPHN stretch occupies residues 100-110 (RDQMRANVINE). The DH domain occupies 103–287 (MRANVINEIM…RNVTQQINER (185 aa)). In terms of domain architecture, PH spans 318-425 (ELIYTGEMAW…WLRAFREERK (108 aa)). Positions 451–470 (KVPKQKGVNSARSVPPSYPP) are disordered. Position 502 is a phosphoserine (S502).

As to quaternary structure, interacts with GPHN.

Its subcellular location is the cytoplasm. It localises to the postsynaptic density. Functionally, acts as a guanine nucleotide exchange factor (GEF) for CDC42. Promotes formation of GPHN clusters. The chain is Rho guanine nucleotide exchange factor 9 (ARHGEF9) from Pongo abelii (Sumatran orangutan).